The sequence spans 80 residues: Acyl carrier protein (80 aa).

A Carrier domain is found at 4 to 79; it reads EDIFSKVKDI…DAVDFIASKA (76 aa). Residue Ser-39 is modified to O-(pantetheine 4'-phosphoryl)serine.

Belongs to the acyl carrier protein (ACP) family. In terms of processing, 4'-phosphopantetheine is transferred from CoA to a specific serine of apo-ACP by AcpS. This modification is essential for activity because fatty acids are bound in thioester linkage to the sulfhydryl of the prosthetic group.

Its subcellular location is the cytoplasm. The protein operates within lipid metabolism; fatty acid biosynthesis. Carrier of the growing fatty acid chain in fatty acid biosynthesis. This is Acyl carrier protein from Synechococcus elongatus (strain ATCC 33912 / PCC 7942 / FACHB-805) (Anacystis nidulans R2).